The sequence spans 131 residues: D-ribose pyranase (131 aa).

His-20 (proton donor) is an active-site residue. Substrate is bound by residues Asp-28, His-98, and 120 to 122 (YAN).

Belongs to the RbsD / FucU family. RbsD subfamily. Homodecamer.

It is found in the cytoplasm. The catalysed reaction is beta-D-ribopyranose = beta-D-ribofuranose. The protein operates within carbohydrate metabolism; D-ribose degradation; D-ribose 5-phosphate from beta-D-ribopyranose: step 1/2. In terms of biological role, catalyzes the interconversion of beta-pyran and beta-furan forms of D-ribose. In Bacillus mycoides (strain KBAB4) (Bacillus weihenstephanensis), this protein is D-ribose pyranase.